We begin with the raw amino-acid sequence, 468 residues long: Heparan-sulfate 6-O-sulfotransferase 2 (468 aa).

Residues Met-1–Arg-9 lie on the Cytoplasmic side of the membrane. A helical; Signal-anchor for type II membrane protein transmembrane segment spans residues Leu-10–Ser-30. At Thr-31–Arg-468 the chain is on the lumenal side. Asn-79 carries N-linked (GlcNAc...) asparagine glycosylation. Residue His-103 to Thr-111 coordinates 3'-phosphoadenylyl sulfate. Substrate-binding positions include Lys-133–Lys-134, Arg-150, Trp-155, and His-160. Catalysis depends on His-160, which acts as the Proton acceptor. Residues Arg-197 and Ser-205 each coordinate 3'-phosphoadenylyl sulfate. The substrate site is built by His-209 and Trp-216. Asn-276 carries N-linked (GlcNAc...) asparagine glycosylation. Thr-329–Leu-331 provides a ligand contact to 3'-phosphoadenylyl sulfate. Residue Asn-332 is glycosylated (N-linked (GlcNAc...) asparagine). Position 335 to 336 (Arg-335 to Ala-336) interacts with 3'-phosphoadenylyl sulfate. A disordered region spans residues Phe-409–Asn-447. Basic and acidic residues predominate over residues Ala-425 to Glu-437. A compositionally biased stretch (acidic residues) spans Ser-438–Asn-447.

This sequence belongs to the sulfotransferase 6 family. As to expression, expressed ubiquitously during gastrulation. During early somitogenesis, strong expression in head and presumptive brain. During mid-somitogenesis, strong expression in eye, hindbrain and somitic boundaries and weak expression in tail bud. During late somitogenesis, strong expression in eye, hindbrain, branchial arch primordia, spinal cord and ventral medial somites. At 24 hours post-fertilization (hpf), strong expression throughout the head, with expression receeding from the trunk spinal cord, ventral medial somites and somitic boundaries; expressed in cells surrounding vascular structures of the dorsal aorta and caudal vein in the tail. At 36 hpf, expressed in lens, optic stalk, hindbrain and pectoral fin. At 48 hpf, expressed in eye, brain, otic vesicle and branchial arches.

It is found in the membrane. The catalysed reaction is alpha-D-glucosaminyl-[heparan sulfate](n) + 3'-phosphoadenylyl sulfate = 6-sulfo-alpha-D-glucosaminyl-[heparan sulfate](n) + adenosine 3',5'-bisphosphate + H(+). In terms of biological role, 6-O-sulfation enzyme which catalyzes the transfer of sulfate from 3'-phosphoadenosine 5'-phosphosulfate (PAPS) to position 6 of the N-sulfoglucosamine residue (GlcNS) of heparan sulfate. Required for muscle development and angiogenesis. This Danio rerio (Zebrafish) protein is Heparan-sulfate 6-O-sulfotransferase 2 (hs6st2).